A 305-amino-acid chain; its full sequence is UDP-3-O-acyl-N-acetylglucosamine deacetylase (305 aa).

Zn(2+)-binding residues include histidine 79, histidine 238, and aspartate 242. Histidine 265 serves as the catalytic Proton donor.

This sequence belongs to the LpxC family. Requires Zn(2+) as cofactor.

It carries out the reaction a UDP-3-O-[(3R)-3-hydroxyacyl]-N-acetyl-alpha-D-glucosamine + H2O = a UDP-3-O-[(3R)-3-hydroxyacyl]-alpha-D-glucosamine + acetate. It participates in glycolipid biosynthesis; lipid IV(A) biosynthesis; lipid IV(A) from (3R)-3-hydroxytetradecanoyl-[acyl-carrier-protein] and UDP-N-acetyl-alpha-D-glucosamine: step 2/6. Functionally, catalyzes the hydrolysis of UDP-3-O-myristoyl-N-acetylglucosamine to form UDP-3-O-myristoylglucosamine and acetate, the committed step in lipid A biosynthesis. The polypeptide is UDP-3-O-acyl-N-acetylglucosamine deacetylase (Klebsiella pneumoniae (strain 342)).